We begin with the raw amino-acid sequence, 433 residues long: Gamma-glutamyl phosphate reductase (433 aa).

The protein belongs to the gamma-glutamyl phosphate reductase family.

It localises to the cytoplasm. It catalyses the reaction L-glutamate 5-semialdehyde + phosphate + NADP(+) = L-glutamyl 5-phosphate + NADPH + H(+). Its pathway is amino-acid biosynthesis; L-proline biosynthesis; L-glutamate 5-semialdehyde from L-glutamate: step 2/2. Functionally, catalyzes the NADPH-dependent reduction of L-glutamate 5-phosphate into L-glutamate 5-semialdehyde and phosphate. The product spontaneously undergoes cyclization to form 1-pyrroline-5-carboxylate. This chain is Gamma-glutamyl phosphate reductase, found in Psychrobacter cryohalolentis (strain ATCC BAA-1226 / DSM 17306 / VKM B-2378 / K5).